The primary structure comprises 513 residues: Tryptophan--tRNA ligase 1 (513 aa).

The short motif at 86 to 94 is the 'HIGH' region element; that stretch reads PTGDPHIGH. Residues 393–397 carry the 'KMSKS' region motif; the sequence is KMSSS.

This sequence belongs to the class-I aminoacyl-tRNA synthetase family.

The protein localises to the cytoplasm. The enzyme catalyses tRNA(Trp) + L-tryptophan + ATP = L-tryptophyl-tRNA(Trp) + AMP + diphosphate + H(+). This is Tryptophan--tRNA ligase 1 from Halobacterium salinarum (strain ATCC 700922 / JCM 11081 / NRC-1) (Halobacterium halobium).